The primary structure comprises 202 residues: MSSFESVVVIDGKGHLLGRLASIVAKQLLNGQKIVVVRCEALNISGEFFRAKLKYHSYLRKMTRYNPTRGGPFHFRAPSRIFYKAVRGMIPHKTARGAAALERLKVFEGVPPPYDKKKKMVVPQALRVLRLQPGRKFCTVGRLSSEVGWKYEDVVSRLEERRKAKGAAYYERKKVAARQLSEAKKSAKVNDKTAEALKEFGY.

Belongs to the universal ribosomal protein uL13 family. As to quaternary structure, component of the large ribosomal subunit (LSU). Mature N.crassa ribosomes consist of a small (40S) and a large (60S) subunit. The 40S small subunit contains 1 molecule of ribosomal RNA (18S rRNA) and at least 32 different proteins. The large 60S subunit contains 3 rRNA molecules (26S, 5.8S and 5S rRNA) and at least 42 different proteins.

It is found in the cytoplasm. In terms of biological role, component of the ribosome, a large ribonucleoprotein complex responsible for the synthesis of proteins in the cell. The small ribosomal subunit (SSU) binds messenger RNAs (mRNAs) and translates the encoded message by selecting cognate aminoacyl-transfer RNA (tRNA) molecules. The large subunit (LSU) contains the ribosomal catalytic site termed the peptidyl transferase center (PTC), which catalyzes the formation of peptide bonds, thereby polymerizing the amino acids delivered by tRNAs into a polypeptide chain. The nascent polypeptides leave the ribosome through a tunnel in the LSU and interact with protein factors that function in enzymatic processing, targeting, and the membrane insertion of nascent chains at the exit of the ribosomal tunnel. This chain is Large ribosomal subunit protein uL13 (crp-46), found in Neurospora crassa (strain ATCC 24698 / 74-OR23-1A / CBS 708.71 / DSM 1257 / FGSC 987).